Consider the following 438-residue polypeptide: UPF0229 protein Smed_1028 (438 aa).

The interval 55 to 107 (PARGVNEPAFQPDSNSGERRHVLPGNREFAAGDRIPKRGGGGGAGNAGAGTGQ) is disordered. Residues 92–105 (RGGGGGAGNAGAGT) are compositionally biased toward gly residues.

Belongs to the UPF0229 family.

This is UPF0229 protein Smed_1028 from Sinorhizobium medicae (strain WSM419) (Ensifer medicae).